A 191-amino-acid chain; its full sequence is Protein Ves (191 aa).

Belongs to the Ves family.

This Escherichia fergusonii (strain ATCC 35469 / DSM 13698 / CCUG 18766 / IAM 14443 / JCM 21226 / LMG 7866 / NBRC 102419 / NCTC 12128 / CDC 0568-73) protein is Protein Ves.